Here is a 142-residue protein sequence, read N- to C-terminus: ATP synthase epsilon chain (142 aa).

This sequence belongs to the ATPase epsilon chain family. F-type ATPases have 2 components, CF(1) - the catalytic core - and CF(0) - the membrane proton channel. CF(1) has five subunits: alpha(3), beta(3), gamma(1), delta(1), epsilon(1). CF(0) has three main subunits: a, b and c.

The protein localises to the cell inner membrane. In terms of biological role, produces ATP from ADP in the presence of a proton gradient across the membrane. This is ATP synthase epsilon chain from Shewanella woodyi (strain ATCC 51908 / MS32).